Reading from the N-terminus, the 228-residue chain is MTRSLKTTLILLASSVISMSALAEFKQAPLPYATNALQPAIDQQTMEIHYGKHHKAYVDNLNAQIKTYPELDKTDLIQLQKQISKYNTAVRNNGGGHFNHTFFWESLAATNKTGQPSPALVKQITQDFGSLDAFKQKFNEAASGRFGSGWAWLIVTPNGKLAVTSTPNQDNPLMDLSETKGTPLLGLDVWEHAYYLKYQNRRADYIKAFWSVVNWNKVNERYNEAIKK.

The N-terminal stretch at 1–23 (MTRSLKTTLILLASSVISMSALA) is a signal peptide. Mn(2+) is bound by residues H49, H100, D188, and H192.

The protein belongs to the iron/manganese superoxide dismutase family. Mn(2+) serves as cofactor.

The protein localises to the periplasm. It catalyses the reaction 2 superoxide + 2 H(+) = H2O2 + O2. Destroys superoxide anion radicals which are normally produced within the cells and which are toxic to biological systems. The sequence is that of Superoxide dismutase [Mn] (sodA) from Acinetobacter baylyi (strain ATCC 33305 / BD413 / ADP1).